Here is a 768-residue protein sequence, read N- to C-terminus: Phosphoribosylformylglycinamidine synthase subunit PurL (768 aa).

Histidine 53 is an active-site residue. Tyrosine 56 is a binding site for ATP. Glutamate 98 serves as a coordination point for Mg(2+). Substrate is bound by residues 99–102 (SHNH) and arginine 121. Histidine 100 acts as the Proton acceptor in catalysis. Aspartate 122 lines the Mg(2+) pocket. Glutamine 253 contacts substrate. Aspartate 285 provides a ligand contact to Mg(2+). Residue 328–330 (ETQ) participates in substrate binding. The ATP site is built by aspartate 516 and glycine 561. Mg(2+) is bound at residue asparagine 562. Residue serine 564 participates in substrate binding.

This sequence belongs to the FGAMS family. As to quaternary structure, monomer. Part of the FGAM synthase complex composed of 1 PurL, 1 PurQ and 2 PurS subunits.

It is found in the cytoplasm. The enzyme catalyses N(2)-formyl-N(1)-(5-phospho-beta-D-ribosyl)glycinamide + L-glutamine + ATP + H2O = 2-formamido-N(1)-(5-O-phospho-beta-D-ribosyl)acetamidine + L-glutamate + ADP + phosphate + H(+). The protein operates within purine metabolism; IMP biosynthesis via de novo pathway; 5-amino-1-(5-phospho-D-ribosyl)imidazole from N(2)-formyl-N(1)-(5-phospho-D-ribosyl)glycinamide: step 1/2. In terms of biological role, part of the phosphoribosylformylglycinamidine synthase complex involved in the purines biosynthetic pathway. Catalyzes the ATP-dependent conversion of formylglycinamide ribonucleotide (FGAR) and glutamine to yield formylglycinamidine ribonucleotide (FGAM) and glutamate. The FGAM synthase complex is composed of three subunits. PurQ produces an ammonia molecule by converting glutamine to glutamate. PurL transfers the ammonia molecule to FGAR to form FGAM in an ATP-dependent manner. PurS interacts with PurQ and PurL and is thought to assist in the transfer of the ammonia molecule from PurQ to PurL. This is Phosphoribosylformylglycinamidine synthase subunit PurL from Methanothrix thermoacetophila (strain DSM 6194 / JCM 14653 / NBRC 101360 / PT) (Methanosaeta thermophila).